Here is a 315-residue protein sequence, read N- to C-terminus: Homeobox-leucine zipper protein HAT3 (315 aa).

The interval 140–163 (SCSLGGGSDDEDGSGNGDDSSRKK) is disordered. The homeobox DNA-binding region spans 159–218 (SSRKKLRLSKEQALVLEETFKEHSTLNPKQKMALAKQLNLRTRQVEVWFQNRRARTKLKQ). Residues 226–247 (LKRCCENLTDENRRLQKEVSEL) are leucine-zipper. Positions 280 to 305 (SSSSVAPPVMNSSSPMGPMSPWAAMP) are enriched in low complexity. Positions 280-315 (SSSSVAPPVMNSSSPMGPMSPWAAMPLRQRPAAGSH) are disordered.

This sequence belongs to the HD-ZIP homeobox family. Class II subfamily.

The protein resides in the nucleus. Its function is as follows. Probable transcription factor. The polypeptide is Homeobox-leucine zipper protein HAT3 (HAT3) (Arabidopsis thaliana (Mouse-ear cress)).